A 454-amino-acid chain; its full sequence is Flavonoid 3-O-glucosyltransferase (454 aa).

Threonine 25 contributes to the UDP binding site. Histidine 26 (proton acceptor) is an active-site residue. Arginine 89 lines the myricetin pocket. Aspartate 124 functions as the Charge relay in the catalytic mechanism. Myricetin contacts are provided by histidine 155, glutamate 192, and phenylalanine 202. The UDP site is built by serine 282, serine 308, tryptophan 334, and alanine 335. Positions 335, 337, 352, 355, 356, 357, and 360 each coordinate UDP-alpha-D-glucose. Histidine 352 is a UDP binding site. UDP-binding residues include asparagine 356, serine 357, and glutamate 360. Glycine 375 lines the myricetin pocket. Aspartate 376 and glutamine 377 together coordinate UDP-alpha-D-glucose.

The protein belongs to the UDP-glycosyltransferase family. In terms of tissue distribution, highly expressed in flower buds, flowers and pods. Lower expression in leaves, petioles and stems.

The protein operates within secondary metabolite biosynthesis; flavonoid biosynthesis. Functionally, catalyzes the glycosylation of flavonoids at the 3-O-position. Glycosylates the 7-O-position if the 3-O-position is not available. Also able to perform 3-O-glycosylation of anthocyanidins. This chain is Flavonoid 3-O-glucosyltransferase (UGT78G1), found in Medicago truncatula (Barrel medic).